Reading from the N-terminus, the 122-residue chain is Large ribosomal subunit protein uL14 (122 aa).

It belongs to the universal ribosomal protein uL14 family. In terms of assembly, part of the 50S ribosomal subunit. Forms a cluster with proteins L3 and L19. In the 70S ribosome, L14 and L19 interact and together make contacts with the 16S rRNA in bridges B5 and B8.

Functionally, binds to 23S rRNA. Forms part of two intersubunit bridges in the 70S ribosome. The protein is Large ribosomal subunit protein uL14 of Nitrosococcus oceani (strain ATCC 19707 / BCRC 17464 / JCM 30415 / NCIMB 11848 / C-107).